A 128-amino-acid chain; its full sequence is DNA-directed RNA polymerase subunit omega (128 aa).

This sequence belongs to the RNA polymerase subunit omega family. As to quaternary structure, the RNAP catalytic core consists of 2 alpha, 1 beta, 1 beta' and 1 omega subunit. When a sigma factor is associated with the core the holoenzyme is formed, which can initiate transcription.

It catalyses the reaction RNA(n) + a ribonucleoside 5'-triphosphate = RNA(n+1) + diphosphate. In terms of biological role, promotes RNA polymerase assembly. Latches the N- and C-terminal regions of the beta' subunit thereby facilitating its interaction with the beta and alpha subunits. This is DNA-directed RNA polymerase subunit omega from Azorhizobium caulinodans (strain ATCC 43989 / DSM 5975 / JCM 20966 / LMG 6465 / NBRC 14845 / NCIMB 13405 / ORS 571).